A 248-amino-acid polypeptide reads, in one-letter code: MARKYFVAANWKCNGTLESIKSLTNSFNNLDFDPSKLDVVVFPVSVHYDHTRKLLQSKFSTGIQNVSKFGNGSYTGEVSAEIAKDLNIEYVIIGHFERRKYFHETDEDVREKLQASLKNNLKAVVCFGESLEQREQNKTIEVITKQVKAFVDLIDNFDNVILAYEPLWAIGTGKTATPEQAQLVHKEIRKIVKDTCGEKQANQIRILYGGSVNTENCSSLIQQEDIDGFLVGNASLKESFVDIIKSAM.

D-glyceraldehyde 3-phosphate-binding residues include N10 and K12. Residue H95 is the Electrophile of the active site. The active-site Proton acceptor is E165. Residues G171, L230, and 232–233 (GN) contribute to the D-glyceraldehyde 3-phosphate site.

This sequence belongs to the triosephosphate isomerase family. Homodimer.

It carries out the reaction D-glyceraldehyde 3-phosphate = dihydroxyacetone phosphate. The protein operates within carbohydrate biosynthesis; gluconeogenesis. Its pathway is carbohydrate degradation; glycolysis; D-glyceraldehyde 3-phosphate from glycerone phosphate: step 1/1. Its function is as follows. Catalyzes the interconversion of glyceraldehyde 3-phosphate and dihydroxyacetone phosphate in the glycolytic and gluconeogenic pathways. The sequence is that of Triosephosphate isomerase from Plasmodium falciparum (isolate 3D7).